The sequence spans 80 residues: Pigment-dispersing hormone type 2 (80 aa).

A signal peptide spans 1–23; sequence MARCFVVLAFLALAAMSLQVATA. Ala77 is modified (alanine amide).

The protein belongs to the arthropod PDH family. In terms of tissue distribution, eyestalk.

It localises to the secreted. In terms of biological role, the pigment-dispersing hormone causes the migration of the distal retinal pigment into the proximal end of the pigment chromatophore cells and thus decreases the amount of light entering the retinulas. May also function as a neurotransmitter and/or neuromodulator. This chain is Pigment-dispersing hormone type 2 (PDH2), found in Penaeus vannamei (Whiteleg shrimp).